We begin with the raw amino-acid sequence, 146 residues long: Horcolin (146 aa).

The interval 1 to 21 is disordered; sequence MSKPVKIGPWGGNGGSERDVQ. The region spanning 4-146 is the Jacalin-type lectin domain; that stretch reads PVKIGPWGGN…LDAIGFYITP (143 aa).

This sequence belongs to the jacalin lectin family.

The protein localises to the secreted. The protein resides in the extracellular space. It is found in the apoplast. Mannose-specific lectin. Has a weak agglutinating activity against rabbit erythrocytes. The sequence is that of Horcolin from Hordeum vulgare (Barley).